Here is a 103-residue protein sequence, read N- to C-terminus: Large ribosomal subunit protein bL32m (103 aa).

A mitochondrion-targeting transit peptide spans 1–47 (MALLRGNSLAISQKMLSVFQASALPHISLRIFISPPSIANIWNSILL). The Zn(2+) site is built by Cys77, Cys80, Cys90, and Cys93.

Belongs to the bacterial ribosomal protein bL32 family. In terms of assembly, component of the mitochondrial large ribosomal subunit (mt-LSU). Mature yeast 74S mitochondrial ribosomes consist of a small (37S) and a large (54S) subunit. The 37S small subunit contains a 15S ribosomal RNA (15S mt-rRNA) and at least 32 different proteins. The 54S large subunit contains a 21S rRNA (21S mt-rRNA) and at least 45 different proteins. bL32m has a zinc binding site. MRPL32 precursor is processed by the m-AAA protease, which cleaves the N-terminal transit peptide. Cleavage by the m-AAA protease takes place prior to assembly into the large subunit, an essential step for mitochondrial ribosome (mitoribosome) assembly. Proper processing by the m-AAA protease is dependent on the zinc-binding region within the tightly folded C-terminal domain of MRPL32: zinc-dependent folding halts degradation initiated from the N-terminus and triggers the release of mature mrpl32.

Its subcellular location is the mitochondrion. Component of the mitochondrial ribosome (mitoribosome), a dedicated translation machinery responsible for the synthesis of mitochondrial genome-encoded proteins, including at least some of the essential transmembrane subunits of the mitochondrial respiratory chain. The mitoribosomes are attached to the mitochondrial inner membrane and translation products are cotranslationally integrated into the membrane. The chain is Large ribosomal subunit protein bL32m (mrpl32) from Schizosaccharomyces pombe (strain 972 / ATCC 24843) (Fission yeast).